Consider the following 373-residue polypeptide: Flagellar P-ring protein (373 aa).

An N-terminal signal peptide occupies residues 1-26 (MKLFFRFVTLVAVLAMSLANVAPAWA).

Belongs to the FlgI family. In terms of assembly, the basal body constitutes a major portion of the flagellar organelle and consists of four rings (L,P,S, and M) mounted on a central rod.

The protein resides in the periplasm. It localises to the bacterial flagellum basal body. Assembles around the rod to form the L-ring and probably protects the motor/basal body from shearing forces during rotation. The sequence is that of Flagellar P-ring protein from Rhizobium johnstonii (strain DSM 114642 / LMG 32736 / 3841) (Rhizobium leguminosarum bv. viciae).